The sequence spans 47 residues: MRNDVLTLTNPMEENELEQILGGGNGVLKTISHECNMNTWQFLFTCC.

The first 23 residues, M1–G23, serve as a signal peptide directing secretion. 2,3-didehydrobutyrine occurs at positions 30 and 39. The segment at residues T30–C35 is a cross-link (beta-methyllanthionine (Thr-Cys)). The lanthionine (Ser-Cys) cross-link spans S32–C46. A cross-link (beta-methyllanthionine (Thr-Cys)) is located at residues T45 to C47.

It belongs to the type A lantibiotic family. Post-translationally, maturation of lantibiotics involves the enzymatic conversion of Thr, and Ser into dehydrated AA and the formation of thioether bonds with cysteine. This is followed by membrane translocation and cleavage of the modified precursor.

It localises to the secreted. Its function is as follows. Lanthionine-containing peptide antibiotic (lantibiotic) active on Gram-positive bacteria. The bactericidal activity of lantibiotics is based on depolarization of energized bacterial cytoplasmic membranes, initiated by the formation of aqueous transmembrane pores. Ruminococcin A is a broad spectrum bacteriocin exhibiting activity against a wide range of pathogenic clostridia and B.longum. The chain is Ruminococcin-A (rumA1) from Blautia hansenii (Ruminococcus hansenii).